Consider the following 335-residue polypeptide: Acetyl-coenzyme A carboxylase carboxyl transferase subunit alpha (335 aa).

The region spanning 38–292 (TLEQKAEELR…ATALSEEIEN (255 aa)) is the CoA carboxyltransferase C-terminal domain.

This sequence belongs to the AccA family. As to quaternary structure, acetyl-CoA carboxylase is a heterohexamer composed of biotin carboxyl carrier protein (AccB), biotin carboxylase (AccC) and two subunits each of ACCase subunit alpha (AccA) and ACCase subunit beta (AccD).

The protein resides in the cytoplasm. It carries out the reaction N(6)-carboxybiotinyl-L-lysyl-[protein] + acetyl-CoA = N(6)-biotinyl-L-lysyl-[protein] + malonyl-CoA. Its pathway is lipid metabolism; malonyl-CoA biosynthesis; malonyl-CoA from acetyl-CoA: step 1/1. Functionally, component of the acetyl coenzyme A carboxylase (ACC) complex. First, biotin carboxylase catalyzes the carboxylation of biotin on its carrier protein (BCCP) and then the CO(2) group is transferred by the carboxyltransferase to acetyl-CoA to form malonyl-CoA. In Heliobacterium modesticaldum (strain ATCC 51547 / Ice1), this protein is Acetyl-coenzyme A carboxylase carboxyl transferase subunit alpha.